The following is a 173-amino-acid chain: Photosystem I assembly protein Ycf3 (173 aa).

3 TPR repeats span residues 35 to 68 (AYIY…EENK), 72 to 105 (GETL…NPKQ), and 120 to 153 (GRNA…YPGG).

It belongs to the Ycf3 family.

The protein localises to the cellular thylakoid membrane. In terms of biological role, essential for the assembly of the photosystem I (PSI) complex. May act as a chaperone-like factor to guide the assembly of the PSI subunits. The sequence is that of Photosystem I assembly protein Ycf3 from Prochlorococcus marinus (strain MIT 9312).